Here is a 297-residue protein sequence, read N- to C-terminus: Adrenocorticotropic hormone receptor (297 aa).

Over 1–23 (MKHITDLYESVNSTMSNKSDCPP) the chain is Extracellular. N-linked (GlcNAc...) asparagine glycans are attached at residues Asn12 and Asn17. 2 cysteine pairs are disulfide-bonded: Cys21/Cys253 and Cys245/Cys251. The helical transmembrane segment at 24–49 (VVLPEEVFFTISVIGVLENLIVLLAV) threads the bilayer. Residues 50–58 (IKNKNLQSP) are Cytoplasmic-facing. A helical transmembrane segment spans residues 59 to 79 (MYFFICSLAISDMLGSLYKIL). The Extracellular segment spans residues 80 to 104 (ENILIIFRNMGYLEPRGGFESTADD). A helical membrane pass occupies residues 105–126 (VVDSLFILSLLGSICSLSAIAA). Topologically, residues 127–147 (DRYITIFHALQYQRLVTPRRA) are cytoplasmic. A helical transmembrane segment spans residues 148 to 168 (AVVLLIIWACCIGSGITIVTF). Residues 169-180 (SHHVPAVIAFTA) lie on the Extracellular side of the membrane. A helical membrane pass occupies residues 181–199 (LFPLMLVFILCLYGHMFLL). Over 200-217 (ARSHARRVSTLPRANMKG) the chain is Cytoplasmic. A helical transmembrane segment spans residues 218-244 (AITLTVLLGVFIFCWAPFVLHILLMTF). At 245 to 256 (CPADPYCACYLA) the chain is on the extracellular side. The helical transmembrane segment at 257-278 (LFQVNAVLIMCNAIIDPFIYAF) threads the bilayer. Over 279 to 297 (RSPELRDAFKKMIICKRYP) the chain is Cytoplasmic. Cys293 is lipidated: S-palmitoyl cysteine.

This sequence belongs to the G-protein coupled receptor 1 family. Homodimer. Interacts with corticotropin (ACTH). Interacts with MRAP; this interaction targets MC2R to the plasma membrane. Interacts with MRAP2; competing with MRAP for binding to MC2R and impairing the binding of corticotropin (ACTH). In terms of processing, ubiquitinated by MGRN1 that may be involved in post-endocytic trafficking and/or degradation of internalized receptor. In terms of tissue distribution, expressed in skin and adrenal gland tissues.

It localises to the cell membrane. Hormone receptor primarily expressed in adrenal cortex that plays a key role in regulating adrenocortical function. Upon corticotropin (ACTH) binding, facilitates the release of adrenal glucocorticoids, including cortisol and corticosterone. In addition, MC2R is required for fetal and neonatal adrenal gland development. Mechanistically, activates adenylate cyclase (cAMP), the MAPK cascade as well as the cAMP-dependent protein kinase A pathway leading to steroidogenic factor 1/NR5A1-mediated transcriptional activation. This is Adrenocorticotropic hormone receptor (MC2R) from Sus scrofa (Pig).